Consider the following 347-residue polypeptide: NADH-ubiquinone oxidoreductase chain 2 (347 aa).

The next 10 membrane-spanning stretches (helical) occupy residues 3–23, 25–45, 59–79, 96–116, 127–147, 150–170, 193–213, 240–260, 274–294, and 323–343; these read PIIL…TMIS, HWLL…PILM, YFLT…INTA, LVTM…FWVP, GMLL…QIFP, NPNI…WGGL, ILMY…MLTI, ITLT…LTGF, SNIM…YFYM, and IFLL…SPAL.

It belongs to the complex I subunit 2 family. Core subunit of respiratory chain NADH dehydrogenase (Complex I) which is composed of 45 different subunits. Interacts with TMEM242.

The protein localises to the mitochondrion inner membrane. It catalyses the reaction a ubiquinone + NADH + 5 H(+)(in) = a ubiquinol + NAD(+) + 4 H(+)(out). Core subunit of the mitochondrial membrane respiratory chain NADH dehydrogenase (Complex I) which catalyzes electron transfer from NADH through the respiratory chain, using ubiquinone as an electron acceptor. Essential for the catalytic activity and assembly of complex I. This Lemur catta (Ring-tailed lemur) protein is NADH-ubiquinone oxidoreductase chain 2.